The following is a 155-amino-acid chain: MYPAHLLVLLAVCVSLLGASAISNRPRNLVQFSELIQCVNKGKRATYHYMDYGCYCGKGGSGTPVDALDRCCKTHDDCYGQAEKKGCFPLLSLYNFACFPGAPQCGKGNTCQRFVCACDLKAALCFAKSPYNNNNYNIDIKKKCQTLIYMRLQTQ.

The N-terminal stretch at 1-21 (MYPAHLLVLLAVCVSLLGASA) is a signal peptide. The propeptide occupies 22–27 (ISNRPR). Disulfide bonds link Cys-38–Cys-98, Cys-54–Cys-144, Cys-56–Cys-72, Cys-71–Cys-125, Cys-78–Cys-118, Cys-87–Cys-111, and Cys-105–Cys-116. 3 residues coordinate Ca(2+): Tyr-55, Gly-57, and Gly-59. Residue His-75 is part of the active site. Asp-76 provides a ligand contact to Ca(2+). Residue Asp-119 is part of the active site.

Belongs to the phospholipase A2 family. Group I subfamily. D49 sub-subfamily. The cofactor is Ca(2+). Expressed by the venom gland.

The protein localises to the secreted. The catalysed reaction is a 1,2-diacyl-sn-glycero-3-phosphocholine + H2O = a 1-acyl-sn-glycero-3-phosphocholine + a fatty acid + H(+). Its function is as follows. Snake venom phospholipase A2 (PLA2) that inhibits neuromuscular transmission by blocking acetylcholine release from the nerve termini. PLA2 catalyzes the calcium-dependent hydrolysis of the 2-acyl groups in 3-sn-phosphoglycerides. The sequence is that of Basic phospholipase A2 PC1 from Laticauda colubrina (Yellow-lipped sea krait).